The chain runs to 357 residues: MNENPAANKIFNEVSSLYKQYFEYAIKVRKWLEIPDDLPHREIGYGMLKKVDNRNISFNTEGEYLTWVLKESPFHLYKSLSYMEYPDLVGGAAKKGLFKREVAFDIDTHKTEKCTHDDSWICEECLGEARNQVLILIEDFLFPDFGLSEKDLKIVFTGNRGYHIYLKPEDPELLKKIEKWGKNERRYFIEYILGKNLNLRNMGSRWKNILISEFKKNKIATKKFEKNSDWKTEIDTRKDTTRRKIYETIDKVKSRLELDEKVMDDDIRLLRTIGSLHGYTGLMVKEITYSSLKSNQFDPLNHGVFSKFHKIMYNVNIKQEIDPLTLKGDTFNHKSTEIPASYLLFLFGHGIDFEILE.

Catalysis depends on residues D105, D107, and D259.

It belongs to the eukaryotic-type primase small subunit family. In terms of assembly, heterodimer of a small subunit (PriS) and a large subunit (PriL). Mg(2+) is required as a cofactor. Mn(2+) serves as cofactor.

Catalytic subunit of DNA primase, an RNA polymerase that catalyzes the synthesis of short RNA molecules used as primers for DNA polymerase during DNA replication. The small subunit contains the primase catalytic core and has DNA synthesis activity on its own. Binding to the large subunit stabilizes and modulates the activity, increasing the rate of DNA synthesis while decreasing the length of the DNA fragments, and conferring RNA synthesis capability. The DNA polymerase activity may enable DNA primase to also catalyze primer extension after primer synthesis. May also play a role in DNA repair. The polypeptide is DNA primase small subunit PriS (Methanococcus maripaludis (strain C5 / ATCC BAA-1333)).